The following is a 517-amino-acid chain: DNA relaxase MbeA (517 aa).

The active-site O-(5'-phospho-DNA)-tyrosine intermediate is the Tyr-19. A divalent metal cation is bound by residues His-97, Glu-104, and Asn-106. 3 disordered regions span residues 281–310, 380–405, and 496–517; these read YSPV…QEGR, PSVR…VTQS, and SLER…SLGW. The span at 297 to 310 shows a compositional bias: basic and acidic residues; sequence GRGERGDDAAQEGR. Basic and acidic residues predominate over residues 496-510; that stretch reads SLERERQPEIQERTL.

This sequence to E.coli MbaA and MbkA. Interacts with MbeB and MbeC to form the relaxosome. The cofactor is Mn(2+). Co(2+) serves as cofactor. Ni(2+) is required as a cofactor.

The enzyme catalyses ATP-independent breakage of single-stranded DNA, followed by passage and rejoining.. Functionally, relaxase involved in plasmid ColE1 conjugative mobilization and is thus essential to promote the specific transfer of the plasmid during conjugation. First catalyzes the specific cleavage of one of the DNA strands at oriT, forming a covalent 5'-phosphotyrosine intermediate. The nic site corresponds to 5'-(1469)CTGG/CTTA(1462)-3' in the cleaved strand. The cleaved strand is then transferred through the dedicated type IV secretion apparatus. MbeA remains covalently linked at the 5' end of the strand, and once in the recipient cell, it probably catalyzes the rejoining of the two ends of the strand, re-forming the circular plasmid DNA. Is functional in vitro without a requirement for the conjugative accessory proteins. The sequence is that of DNA relaxase MbeA (mbeA) from Escherichia coli.